Reading from the N-terminus, the 599-residue chain is MFS-type transporter ucsM (599 aa).

Over residues 23–34 (AHHHGKEREAHR) the composition is skewed to basic and acidic residues. The interval 23–42 (AHHHGKEREAHRQSLSSVPG) is disordered. The next 8 membrane-spanning stretches (helical) occupy residues 147 to 167 (VALG…GAWL), 178 to 198 (ILIG…GAVP), 204 to 224 (GKGT…AGLF), 263 to 283 (IMLI…ATVY), 291 to 311 (WLAF…LWYL), 386 to 406 (IFLY…ILPS), 424 to 444 (FNPI…YPAL), and 454 to 474 (ISRI…SSLV). N-linked (GlcNAc...) asparagine glycosylation occurs at Asn517. 2 consecutive transmembrane segments (helical) span residues 539-559 (LFLF…PAIV) and 563-583 (LVWV…IFWV).

The protein belongs to the major facilitator superfamily. Proton-dependent oligopeptide transporter (POT/PTR) (TC 2.A.17) family.

It is found in the membrane. MFS-type transporter; part of the gene cluster that mediates the biosynthesis of UCS1025A, a member of the pyrrolizidinone family that acts as a strong telomerase inhibitor and displays potent antibacterial and antitumor properties. These compounds share a hemiaminal-containing pyrrolizidinone core fused with a gamma-lactone, giving a furopyrrolizidine that is connected to a decalin fragment. This is MFS-type transporter ucsM from Acremonium sp.